A 496-amino-acid chain; its full sequence is Glutamyl-tRNA(Gln) amidotransferase subunit A (496 aa).

Active-site charge relay system residues include lysine 75 and serine 150. Serine 174 functions as the Acyl-ester intermediate in the catalytic mechanism.

Belongs to the amidase family. GatA subfamily. In terms of assembly, heterotrimer of A, B and C subunits.

The enzyme catalyses L-glutamyl-tRNA(Gln) + L-glutamine + ATP + H2O = L-glutaminyl-tRNA(Gln) + L-glutamate + ADP + phosphate + H(+). Its function is as follows. Allows the formation of correctly charged Gln-tRNA(Gln) through the transamidation of misacylated Glu-tRNA(Gln) in organisms which lack glutaminyl-tRNA synthetase. The reaction takes place in the presence of glutamine and ATP through an activated gamma-phospho-Glu-tRNA(Gln). This Burkholderia lata (strain ATCC 17760 / DSM 23089 / LMG 22485 / NCIMB 9086 / R18194 / 383) protein is Glutamyl-tRNA(Gln) amidotransferase subunit A.